A 223-amino-acid chain; its full sequence is uncharacterized protein (223 aa).

Residues M1–K11 are compositionally biased toward basic residues. Residues M1 to S37 are disordered. Residues E12–S37 are compositionally biased toward basic and acidic residues. S43 is subject to Phosphoserine. Disordered stretches follow at residues L49–V73 and T196–H223. The segment covering N51–Q61 has biased composition (polar residues). A compositionally biased stretch (low complexity) spans T62–V73. Basic residues predominate over residues H202–H223.

This is an uncharacterized protein from Homo sapiens (Human).